The primary structure comprises 161 residues: Peroxynitrite isomerase 2 (161 aa).

The GXWXGXG signature appears at 17-23; that stretch reads GTWTGRG. H152 contacts heme b.

Belongs to the nitrobindin family. Homodimer. Requires heme b as cofactor.

The enzyme catalyses peroxynitrite = nitrate. It participates in nitrogen metabolism. Its function is as follows. Heme-binding protein able to scavenge peroxynitrite and to protect free L-tyrosine against peroxynitrite-mediated nitration, by acting as a peroxynitrite isomerase that converts peroxynitrite to nitrate. Therefore, this protein likely plays a role in peroxynitrite sensing and in the detoxification of reactive nitrogen and oxygen species (RNS and ROS, respectively). Is able to bind nitric oxide (NO) in vitro, but may act as a sensor of peroxynitrite levels in vivo. This Mycobacterium avium (strain 104) protein is Peroxynitrite isomerase 2.